The following is a 342-amino-acid chain: Isopentenyl-diphosphate delta-isomerase (342 aa).

12 to 13 (RK) serves as a coordination point for substrate. FMN contacts are provided by residues 71 to 73 (AMT), serine 101, and asparagine 129. 101–103 (SQR) is a substrate binding site. A substrate-binding site is contributed by glutamine 163. Residue glutamate 164 coordinates Mg(2+). FMN-binding positions include lysine 195, threonine 225, 272–274 (GIR), and 293–294 (AR).

It belongs to the IPP isomerase type 2 family. As to quaternary structure, homooctamer. Dimer of tetramers. Requires FMN as cofactor. The cofactor is NADPH. Mg(2+) is required as a cofactor.

It localises to the cytoplasm. It carries out the reaction isopentenyl diphosphate = dimethylallyl diphosphate. In terms of biological role, involved in the biosynthesis of isoprenoids. Catalyzes the 1,3-allylic rearrangement of the homoallylic substrate isopentenyl (IPP) to its allylic isomer, dimethylallyl diphosphate (DMAPP). The sequence is that of Isopentenyl-diphosphate delta-isomerase from Mycolicibacterium vanbaalenii (strain DSM 7251 / JCM 13017 / BCRC 16820 / KCTC 9966 / NRRL B-24157 / PYR-1) (Mycobacterium vanbaalenii).